A 182-amino-acid chain; its full sequence is dTTP/UTP pyrophosphatase (182 aa).

Residue Asp64 is the Proton acceptor of the active site.

It belongs to the Maf family. YhdE subfamily. A divalent metal cation is required as a cofactor.

The protein localises to the cytoplasm. It carries out the reaction dTTP + H2O = dTMP + diphosphate + H(+). It catalyses the reaction UTP + H2O = UMP + diphosphate + H(+). Its function is as follows. Nucleoside triphosphate pyrophosphatase that hydrolyzes dTTP and UTP. May have a dual role in cell division arrest and in preventing the incorporation of modified nucleotides into cellular nucleic acids. The sequence is that of dTTP/UTP pyrophosphatase from Thermosipho melanesiensis (strain DSM 12029 / CIP 104789 / BI429).